Consider the following 260-residue polypeptide: 3-methyl-2-oxobutanoate hydroxymethyltransferase (260 aa).

Residues Asp-44 and Asp-83 each contribute to the Mg(2+) site. Residues 44–45 (DS), Asp-83, and Lys-113 each bind 3-methyl-2-oxobutanoate. Glu-115 is a Mg(2+) binding site. Catalysis depends on Glu-182, which acts as the Proton acceptor.

This sequence belongs to the PanB family. In terms of assembly, homodecamer; pentamer of dimers. Mg(2+) is required as a cofactor.

Its subcellular location is the cytoplasm. It carries out the reaction 3-methyl-2-oxobutanoate + (6R)-5,10-methylene-5,6,7,8-tetrahydrofolate + H2O = 2-dehydropantoate + (6S)-5,6,7,8-tetrahydrofolate. The protein operates within cofactor biosynthesis; (R)-pantothenate biosynthesis; (R)-pantoate from 3-methyl-2-oxobutanoate: step 1/2. In terms of biological role, catalyzes the reversible reaction in which hydroxymethyl group from 5,10-methylenetetrahydrofolate is transferred onto alpha-ketoisovalerate to form ketopantoate. This chain is 3-methyl-2-oxobutanoate hydroxymethyltransferase, found in Synechocystis sp. (strain ATCC 27184 / PCC 6803 / Kazusa).